The following is a 487-amino-acid chain: MTFYGKDISGLHADLVAKKVSATELTKAAFDRIKATDDQVGAFLALNEEAALKQAAELDQAGIAEDQLLAGIPLAVKDNIVTKGLTTTAASKILENFKPVYDATVVEKLNAAGVINVGKVNLDEFAMGSSTENSAFKTTKNPWDLTRVPGGSSGGSAAAVAAGDVLGALGSDTGGSIRIPASFTGTVGMKPTYGRVSRWGLIAFGSSFDQIGWLTQSVKDNAILMSAIAGKDDRDMTSANQPVPDFAAGLNDQADIKGMKIAVPREYMEGLDDDVQEVIEASLKHLESLGATIDEVSLPHTKYGVPAYYILASSEASSNLQRFDGIRYGFRADDVKNLEDVYVKTRSQGFGDEVKLRIMLGTFSLSAGFYDAYFNKAAKVRRLIAQDFDDVLKDHDLIVGPTGTSTAFKIGAEIADPKQMYFNDVLTVTLNMAGLPGMSIPAGFSKDNGMPIGLQMIGKRFDEATIYKAGYVFEQTTDFHKQTPELG.

Active-site charge relay system residues include Lys77 and Ser152. Ser176 serves as the catalytic Acyl-ester intermediate.

The protein belongs to the amidase family. GatA subfamily. As to quaternary structure, heterotrimer of A, B and C subunits.

The catalysed reaction is L-glutamyl-tRNA(Gln) + L-glutamine + ATP + H2O = L-glutaminyl-tRNA(Gln) + L-glutamate + ADP + phosphate + H(+). Its function is as follows. Allows the formation of correctly charged Gln-tRNA(Gln) through the transamidation of misacylated Glu-tRNA(Gln) in organisms which lack glutaminyl-tRNA synthetase. The reaction takes place in the presence of glutamine and ATP through an activated gamma-phospho-Glu-tRNA(Gln). In Limosilactobacillus fermentum (strain NBRC 3956 / LMG 18251) (Lactobacillus fermentum), this protein is Glutamyl-tRNA(Gln) amidotransferase subunit A.